The primary structure comprises 744 residues: Leucine-rich repeat extensin-like protein 1 (744 aa).

A signal peptide spans M1 to A26. N-linked (GlcNAc...) asparagine glycans are attached at residues N71 and N77. 9 LRR repeats span residues L122–R145, K147–L170, P171–R194, L196–S217, V219–M240, G241–L265, K266–M289, K290–L313, and N315–S336. The N-linked (GlcNAc...) asparagine glycan is linked to N253. 2 N-linked (GlcNAc...) asparagine glycosylation sites follow: N318 and N344. The stretch at F381–Y404 is one LRR 10 repeat. Positions S382 to Y744 are contains the Ser-Pro(4) repeats. 4 disordered regions span residues P408–P445, V518–S537, P555–P576, and P658–Y744. Over residues S430–Y439 the composition is skewed to low complexity. Residues Y704 to P729 show a composition bias toward pro residues.

Hydroxylated on proline residues in the S-P-P-P-P repeat. In terms of processing, O-glycosylated on hydroxyprolines. As to expression, expressed in root hair cells (at protein level).

Its subcellular location is the secreted. The protein localises to the cell wall. Modulates cell morphogenesis by regulating cell wall formation and assembly, and/or growth polarization. Together with LRX2, component of the extracellular mechanism regulating root hair morphogenesis and elongation. This chain is Leucine-rich repeat extensin-like protein 1 (LRX1), found in Arabidopsis thaliana (Mouse-ear cress).